Here is a 261-residue protein sequence, read N- to C-terminus: Lysoplasmalogenase (261 aa).

The next 8 membrane-spanning stretches (helical) occupy residues 29-49 (GWVV…VIAL), 65-85 (PAFK…HPIG), 90-107 (WLVP…LLAI), 111-133 (TWAF…GALL), 146-166 (VAAV…FWPH), 172-192 (LTIP…TALL), 197-217 (TIWT…IGIG), and 227-247 (AVPI…GFFF).

This sequence belongs to the TMEM86 family.

It localises to the cell membrane. The enzyme catalyses a 1-O-(1Z-alkenyl)-sn-glycero-3-phosphocholine + H2O = a 2,3-saturated aldehyde + sn-glycerol 3-phosphocholine. The catalysed reaction is a 1-O-(1Z-alkenyl)-sn-glycero-3-phosphoethanolamine + H2O = a 2,3-saturated aldehyde + sn-glycero-3-phosphoethanolamine. Functionally, specifically hydrolyzes the vinyl ether bond of lysoplasmenylcholine (pLPC) and lysoplasmenylethanolamine (pLPE) to release a fatty aldehyde and glycerophospho-choline or glycerophospho-ethanolamine. This chain is Lysoplasmalogenase, found in Mycobacterium bovis (strain ATCC BAA-935 / AF2122/97).